Here is a 131-residue protein sequence, read N- to C-terminus: Small ribosomal subunit protein uS11 (131 aa).

It belongs to the universal ribosomal protein uS11 family. As to quaternary structure, part of the 30S ribosomal subunit. Interacts with proteins S7 and S18. Binds to IF-3.

In terms of biological role, located on the platform of the 30S subunit, it bridges several disparate RNA helices of the 16S rRNA. Forms part of the Shine-Dalgarno cleft in the 70S ribosome. The polypeptide is Small ribosomal subunit protein uS11 (Geobacter sulfurreducens (strain ATCC 51573 / DSM 12127 / PCA)).